Reading from the N-terminus, the 144-residue chain is MTIERTFSIVKPDAVKRNLIGAIYRRIEKTGMQIVAAKMLRLTKEQAEGFYAEHEGKEFFDELVAYMMSGPVMVQVLEGENAVVRYRELMGKTNPEEAACGSLRADYAISMRYNSVHGADSPESAAREIAYFFAEDEICPRPAE.

Residues K11, F59, R87, T93, R104, and N114 each coordinate ATP. H117 serves as the catalytic Pros-phosphohistidine intermediate.

The protein belongs to the NDK family. As to quaternary structure, homotetramer. Mg(2+) is required as a cofactor.

It is found in the cytoplasm. It catalyses the reaction a 2'-deoxyribonucleoside 5'-diphosphate + ATP = a 2'-deoxyribonucleoside 5'-triphosphate + ADP. The enzyme catalyses a ribonucleoside 5'-diphosphate + ATP = a ribonucleoside 5'-triphosphate + ADP. In terms of biological role, major role in the synthesis of nucleoside triphosphates other than ATP. The ATP gamma phosphate is transferred to the NDP beta phosphate via a ping-pong mechanism, using a phosphorylated active-site intermediate. This is Nucleoside diphosphate kinase from Aliivibrio fischeri (strain ATCC 700601 / ES114) (Vibrio fischeri).